A 189-amino-acid chain; its full sequence is Ras-like protein 1 (189 aa).

Position 10-17 (10-17 (GAGGVGKS)) interacts with GTP. The Effector region motif lies at 32-40 (YDPTIEDSY). Residues 57–61 (DTAGQ) and 116–119 (NKCD) each bind GTP. Cys-186 is subject to Cysteine methyl ester. The S-geranylgeranyl cysteine moiety is linked to residue Cys-186. A propeptide spans 187 to 189 (KIL) (removed in mature form).

This sequence belongs to the small GTPase superfamily. Ras family.

It is found in the cell membrane. It catalyses the reaction GTP + H2O = GDP + phosphate + H(+). Its activity is regulated as follows. Alternates between an inactive form bound to GDP and an active form bound to GTP. Activated by a guanine nucleotide-exchange factor (GEF) and inactivated by a GTPase-activating protein (GAP). Ras proteins bind GDP/GTP and possess intrinsic GTPase activity. Plays a role in eye development by regulating cell growth, survival of postmitotic ommatidial cells and differentiation of photoreceptor cells. During larval development, mediates Ptth/tor signaling leading to the production of ecdysone, a hormone required for the initiation of metamorphosis. The protein is Ras-like protein 1 of Drosophila persimilis (Fruit fly).